The sequence spans 330 residues: D-alanine--D-alanine ligase (330 aa).

In terms of domain architecture, ATP-grasp spans 122-323; the sequence is NRFLSGFGIR…MKEVLCTIIR (202 aa). 151-206 is an ATP binding site; sequence IARMGLPLFVKPNVGGSSIATTKVVEAAQLLPAIEQAFSEGEEVMIERLICGTEVT. The Mg(2+) site is built by Asp277, Glu290, and Asn292.

The protein belongs to the D-alanine--D-alanine ligase family. Requires Mg(2+) as cofactor. Mn(2+) is required as a cofactor.

The protein resides in the cytoplasm. The catalysed reaction is 2 D-alanine + ATP = D-alanyl-D-alanine + ADP + phosphate + H(+). It participates in cell wall biogenesis; peptidoglycan biosynthesis. Cell wall formation. In Porphyromonas gingivalis (strain ATCC BAA-308 / W83), this protein is D-alanine--D-alanine ligase.